A 229-amino-acid chain; its full sequence is Protein ras-2 (229 aa).

Gly-15–Thr-22 contributes to the GTP binding site. Residues Tyr-37–Tyr-45 carry the Effector region motif. Asp-62–Gln-66 serves as a coordination point for GTP. The disordered stretch occupies residues Lys-109–Pro-132. The span at Ser-111–Ala-126 shows a compositional bias: low complexity. Asn-140–Asp-143 provides a ligand contact to GTP. A disordered region spans residues Leu-188–Ile-229. Residues Lys-209–Pro-219 show a composition bias toward basic and acidic residues. Positions Lys-220 to Ile-229 are enriched in basic residues. Cysteine methyl ester is present on Cys-226. Cys-226 is lipidated: S-farnesyl cysteine. The propeptide at Leu-227 to Ile-229 is removed in mature form.

It belongs to the small GTPase superfamily. Ras family.

Its subcellular location is the cell membrane. It catalyses the reaction GTP + H2O = GDP + phosphate + H(+). Functionally, ras proteins bind GDP/GTP and possess intrinsic GTPase activity. The polypeptide is Protein ras-2 (ras-2) (Neurospora crassa (strain ATCC 24698 / 74-OR23-1A / CBS 708.71 / DSM 1257 / FGSC 987)).